The primary structure comprises 220 residues: Superoxide dismutase [Cu-Zn], chloroplastic (220 aa).

The transit peptide at 1 to 66 (MAAHCILFSS…AAPKPLTVFA (66 aa)) directs the protein to the chloroplast. Cu cation-binding residues include H112, H114, and H129. C123 and C212 are joined by a disulfide. Zn(2+)-binding residues include H129, H137, H146, and D149. Cu cation is bound at residue H186.

This sequence belongs to the Cu-Zn superoxide dismutase family. In terms of assembly, homotetramer. Requires Cu cation as cofactor. It depends on Zn(2+) as a cofactor.

Its subcellular location is the plastid. The protein resides in the chloroplast. The catalysed reaction is 2 superoxide + 2 H(+) = H2O2 + O2. Its function is as follows. Destroys radicals which are normally produced within the cells and which are toxic to biological systems. The polypeptide is Superoxide dismutase [Cu-Zn], chloroplastic (SODCP) (Solidago canadensis var. scabra (Tall goldenrod)).